A 316-amino-acid chain; its full sequence is Transcription initiation factor IIB (316 aa).

A TFIIB-type zinc finger spans residues 7-38 (FRLRCPVCGSTDIVFNEETGEYVCARCGTIVL). Zn(2+) is bound by residues C11, C14, C30, and C33. Positions 51–73 (FTPEERERRGRTGAPLSPTLHDH) are disordered. 2 repeat units span residues 124–207 (NELD…TKEL) and 218–299 (DHIP…EIMK).

This sequence belongs to the TFIIB family.

Its function is as follows. Stabilizes TBP binding to an archaeal box-A promoter. Also responsible for recruiting RNA polymerase II to the pre-initiation complex (DNA-TBP-TFIIB). This Ignicoccus hospitalis (strain KIN4/I / DSM 18386 / JCM 14125) protein is Transcription initiation factor IIB.